Here is a 427-residue protein sequence, read N- to C-terminus: Glutamate-1-semialdehyde 2,1-aminomutase (427 aa).

Lys-265 is modified (N6-(pyridoxal phosphate)lysine).

Belongs to the class-III pyridoxal-phosphate-dependent aminotransferase family. HemL subfamily. As to quaternary structure, homodimer. Requires pyridoxal 5'-phosphate as cofactor.

It is found in the cytoplasm. The catalysed reaction is (S)-4-amino-5-oxopentanoate = 5-aminolevulinate. The protein operates within porphyrin-containing compound metabolism; protoporphyrin-IX biosynthesis; 5-aminolevulinate from L-glutamyl-tRNA(Glu): step 2/2. This chain is Glutamate-1-semialdehyde 2,1-aminomutase, found in Bordetella petrii (strain ATCC BAA-461 / DSM 12804 / CCUG 43448).